Consider the following 124-residue polypeptide: Small ribosomal subunit protein uS12c (124 aa).

Residues 105–124 (AGVKDRRQSRSKYGAKRPKA) form a disordered region. The segment covering 113–124 (SRSKYGAKRPKA) has biased composition (basic residues).

This sequence belongs to the universal ribosomal protein uS12 family. As to quaternary structure, part of the 30S ribosomal subunit.

It is found in the plastid. The protein resides in the cyanelle. With S4 and S5 plays an important role in translational accuracy. Located at the interface of the 30S and 50S subunits. This chain is Small ribosomal subunit protein uS12c (rps12), found in Cyanophora paradoxa.